A 104-amino-acid polypeptide reads, in one-letter code: Large ribosomal subunit protein uL24 (104 aa).

It belongs to the universal ribosomal protein uL24 family. In terms of assembly, part of the 50S ribosomal subunit.

Functionally, one of two assembly initiator proteins, it binds directly to the 5'-end of the 23S rRNA, where it nucleates assembly of the 50S subunit. One of the proteins that surrounds the polypeptide exit tunnel on the outside of the subunit. This chain is Large ribosomal subunit protein uL24, found in Erwinia tasmaniensis (strain DSM 17950 / CFBP 7177 / CIP 109463 / NCPPB 4357 / Et1/99).